The chain runs to 573 residues: Cytosolic 5'-nucleotidase 1B (573 aa).

The segment covering 1–11 has biased composition (basic residues); that stretch reads MSQTSLKHKKK. 2 disordered regions span residues 1 to 200 and 218 to 238; these read MSQT…PPTE and EPEYISDGPQQRQRQQTEEDE. Basic and acidic residues predominate over residues 12–35; the sequence is NEPGMRYSKESLDAEKRKDSDKTG. Positions 60 to 73 are enriched in polar residues; it reads NQWSRTSRSPSTGA. Residues 93 to 105 are compositionally biased toward low complexity; the sequence is SSTTSRTSSASPS. Polar residues predominate over residues 115–136; that stretch reads TSEKSSIQQTPQNRPITQLESQ. Composition is skewed to basic and acidic residues over residues 161–174 and 182–194; these read WAHRENREPRDLQL and DSREGMPKTREYP. The Nucleophile role is filled by D428.

The protein belongs to the 5'-nucleotidase type 3 family. The cofactor is Mg(2+). As to expression, expressed at highest levels in testis. Also expressed in brain, skeletal muscle, kidney and heart.

It localises to the cytoplasm. The enzyme catalyses a ribonucleoside 5'-phosphate + H2O = a ribonucleoside + phosphate. It carries out the reaction AMP + H2O = adenosine + phosphate. Activated by ADP. Its function is as follows. Catalyzes the hydrolysis of nucleotide monophosphates, releasing inorganic phosphate and the corresponding nucleoside, AMP is the major substrate. The protein is Cytosolic 5'-nucleotidase 1B (Nt5c1b) of Mus musculus (Mouse).